A 129-amino-acid chain; its full sequence is MGDLIFPINPGAALAIHVALSAGIVAAIIVVAAWLREKRSGARADVPYEGGVLPAAPQQGPVNAPYFLIAALFVIFDMEAAILFAWAVAARDTGWLGLIEAAVFIGVLLLALVYLWADGALDWHKERRR.

The next 3 membrane-spanning stretches (helical) occupy residues Leu-14–Trp-34, Phe-67–Ala-87, and Trp-95–Leu-115.

The protein belongs to the complex I subunit 3 family. In terms of assembly, NDH-1 is composed of 14 different subunits. Subunits NuoA, H, J, K, L, M, N constitute the membrane sector of the complex.

The protein localises to the cell inner membrane. It catalyses the reaction a quinone + NADH + 5 H(+)(in) = a quinol + NAD(+) + 4 H(+)(out). In terms of biological role, NDH-1 shuttles electrons from NADH, via FMN and iron-sulfur (Fe-S) centers, to quinones in the respiratory chain. The immediate electron acceptor for the enzyme in this species is believed to be ubiquinone. Couples the redox reaction to proton translocation (for every two electrons transferred, four hydrogen ions are translocated across the cytoplasmic membrane), and thus conserves the redox energy in a proton gradient. In Rhodopseudomonas palustris (strain BisB5), this protein is NADH-quinone oxidoreductase subunit A.